We begin with the raw amino-acid sequence, 182 residues long: Adenylate kinase (182 aa).

Residue 12 to 17 coordinates ATP; that stretch reads GAGKGT. The segment at 32–61 is NMP; the sequence is STGDLLRTEVGAKTPLGQEAAAVMNRGELV. AMP contacts are provided by residues Thr33, Arg38, 59 to 61, 85 to 88, and Gln92; these read ELV and GFPR. The interval 126–132 is LID; sequence SRGRSDD. Arg127 contributes to the ATP binding site. Arg129 and Arg140 together coordinate AMP. ATP is bound at residue Gly168.

The protein belongs to the adenylate kinase family. As to quaternary structure, monomer.

The protein localises to the cytoplasm. The enzyme catalyses AMP + ATP = 2 ADP. It participates in purine metabolism; AMP biosynthesis via salvage pathway; AMP from ADP: step 1/1. Functionally, catalyzes the reversible transfer of the terminal phosphate group between ATP and AMP. Plays an important role in cellular energy homeostasis and in adenine nucleotide metabolism. This is Adenylate kinase from Prochlorococcus marinus (strain MIT 9313).